The primary structure comprises 770 residues: Protein PAT1 homolog 1 (770 aa).

The disordered stretch occupies residues 1–42 (MFRYESLEDCPLDEDEDAFQGLGEEDEEIDQFNDDTFGSGAV). A region A; interaction with DDX6/RCK region spans residues 1 to 84 (MFRYESLEDC…EMDLLGDHEE (84 aa)). An involved in nuclear foci localization region spans residues 1–397 (MFRYESLEDC…HQSSHQDHLR (397 aa)). Residues 7–33 (LEDCPLDEDEDAFQGLGEEDEEIDQFN) show a composition bias toward acidic residues. The region N; interaction with decapping machinery stretch occupies residues 85-388 (NLAERLSKMV…LNGTGDRGGH (304 aa)). The Nuclear export signal motif lies at 86–95 (LAERLSKMVI). The segment at 155-195 (PQRPLQGPEDDRDLSERALPRRSTSPIIGSPPVRAVPIGTP) is disordered. A Phosphoserine modification is found at serine 177. Residue threonine 178 is modified to Phosphothreonine. Serine 179 and serine 184 each carry phosphoserine. Residue threonine 194 is modified to Phosphothreonine. Arginine 217, arginine 223, and arginine 263 each carry asymmetric dimethylarginine. The tract at residues 223–397 (RYPAPYGERI…HQSSHQDHLR (175 aa)) is involved in RNA-binding. A Phosphoserine modification is found at serine 278. Arginine 284 is subject to Asymmetric dimethylarginine. Disordered stretches follow at residues 319–340 (FSAP…GPHL) and 376–396 (HRNL…QDHL). Over residues 321-337 (APPPATPPPQQHPPGPG) the composition is skewed to pro residues. An Omega-N-methylarginine modification is found at arginine 385. Basic and acidic residues predominate over residues 385–396 (RGGHQSSHQDHL). Residues 389-448 (QSSHQDHLRKDPYANLMLQREKDWVSKIQMMQLQSTDPYLDDFYYQNYFEKLEKLSAAEE) are region H. The interval 398–770 (KDPYANLMLQ…TKLQLVQGIR (373 aa)) is involved in nuclear speckle localization. The region C stretch occupies residues 449–770 (IQGDGPKKER…TKLQLVQGIR (322 aa)).

It belongs to the PAT1 family. Interacts (via region A) with DDX6/RCK. Interacts (via region H and region C) with LSM1 and LSM4. Interacts (via region N) with DCP1A, DCP2, EDC3, EDC4 and XRN1. Interacts with the CCR4-NOT complex. Interacts with the Lsm-containing SMN-Sm protein complex. Interacts with EIF4ENIF1/4E-T.

It is found in the cytoplasm. It localises to the P-body. The protein resides in the nucleus. The protein localises to the PML body. Its subcellular location is the nucleus speckle. Functionally, RNA-binding protein involved in deadenylation-dependent decapping of mRNAs, leading to the degradation of mRNAs. Acts as a scaffold protein that connects deadenylation and decapping machinery. Required for cytoplasmic mRNA processing body (P-body) assembly. The chain is Protein PAT1 homolog 1 (Patl1) from Mus musculus (Mouse).